The chain runs to 397 residues: Acetate kinase (397 aa).

Mg(2+) is bound at residue Asn-8. Lys-15 is an ATP binding site. Arg-89 lines the substrate pocket. The active-site Proton donor/acceptor is the Asp-146. Residues 206-210 (HLGNG), 281-283 (DLR), and 329-333 (GIGEN) each bind ATP. Position 382 (Glu-382) interacts with Mg(2+).

It belongs to the acetokinase family. Homodimer. Mg(2+) serves as cofactor. Requires Mn(2+) as cofactor.

Its subcellular location is the cytoplasm. The enzyme catalyses acetate + ATP = acetyl phosphate + ADP. Its pathway is metabolic intermediate biosynthesis; acetyl-CoA biosynthesis; acetyl-CoA from acetate: step 1/2. Catalyzes the formation of acetyl phosphate from acetate and ATP. Can also catalyze the reverse reaction. The chain is Acetate kinase from Geobacillus sp. (strain WCH70).